The primary structure comprises 616 residues: Zinc metalloproteinase-disintegrin-like ecarin (616 aa).

The N-terminal stretch at 1 to 20 (MIQILLVIICLAVFPYQGCS) is a signal peptide. Residues 21–190 (IILGSGNVND…EPIKKTLGLI (170 aa)) constitute a propeptide that is removed on maturation. Positions 201-397 (KFIELVVVVD…YNPKCILDPP (197 aa)) constitute a Peptidase M12B domain. E204 provides a ligand contact to Ca(2+). N-linked (GlcNAc...) asparagine glycans are attached at residues N219 and N261. D288 contributes to the Ca(2+) binding site. N-linked (GlcNAc...) asparagine glycosylation is found at N295 and N326. Cystine bridges form between C312–C392, C352–C376, and C354–C359. H337 contacts Zn(2+). E338 is an active-site residue. The Zn(2+) site is built by H341 and H347. 7 residues coordinate Ca(2+): C392, V407, N410, I412, E414, E417, and D420. The region spanning 405–491 (PAVCGNEIWE…ECPRNEFQRN (87 aa)) is the Disintegrin domain. 14 cysteine pairs are disulfide-bonded: C408–C437, C419–C432, C421–C427, C431–C454, C445–C451, C450–C476, C463–C483, C470–C502, C495–C507, C514–C567, C529–C578, C542–C555, C562–C604, and C598–C609. A D/ECD-tripeptide motif is present at residues 469–471 (DCD). Ca(2+)-binding residues include D471, V472, and N486. An N-linked (GlcNAc...) asparagine glycan is attached at N497.

The protein belongs to the venom metalloproteinase (M12B) family. P-III subfamily. P-IIIa sub-subfamily. Monomer. The cofactor is Zn(2+). Expressed by the venom gland.

It localises to the secreted. In terms of biological role, snake venom zinc metalloproteinase that catalyzes the conversion of prothrombin (F2) to alpha-thrombin through formation of a thrombin intermediate, thereby functioning as a procoagulant protein. Has a low Km for prothrombin and a high kcat. Cleaves the 320-Arg-Ile-321 bond in prothrombin and produces meizothrombin which is ultimately converted to alpha-thrombin by autolysis. In Echis carinatus (Saw-scaled viper), this protein is Zinc metalloproteinase-disintegrin-like ecarin.